The sequence spans 593 residues: Sodium-independent sulfate anion transporter (593 aa).

The Extracellular segment spans residues 1–34; that stretch reads MAPDTCCCSATALRRRLPVLAWVPDYSLQWLRLD. Residues 35-55 form a helical membrane-spanning segment; it reads FIAGLSVGLTVIPQALAYAEV. A topological domain (cytoplasmic) is located at residue Ala56. A helical membrane pass occupies residues 57 to 77; sequence GLPPQYGLYSAFMGCFVYFFL. Residues 78–82 lie on the Extracellular side of the membrane; sequence GTSRD. Residues 83–100 traverse the membrane as a helical segment; sequence VTLGPTAIMSLLVSFYTF. Over 101-106 the chain is Cytoplasmic; that stretch reads REPAYA. Residues 107–127 form a helical membrane-spanning segment; sequence VLLAFLSGCIQLAMGLLHLGF. Residues 128–176 are Extracellular-facing; that stretch reads LLDFISCPVIKGFTSAASITIGFGQIKNLLGLQKIPRQFFLQVYHTFLH. The chain crosses the membrane as a helical span at residues 177–197; the sequence is IGETRVGDAVLGLASMLLLLV. Residues 198 to 233 are Cytoplasmic-facing; it reads LKCMREHMPPPHPEMPLAVKFSRGLVWTVTTARNAL. A helical membrane pass occupies residues 234–254; sequence VVSSAALIAYAFEVTGSHPFV. The Extracellular portion of the chain corresponds to 255 to 287; it reads LTGKIAEGLPPVRIPPFSVTRDNKTISFSEMVQ. A helical membrane pass occupies residues 288-308; sequence DMGAGLAVVPLMGLLESIAVA. Over 309-324 the chain is Cytoplasmic; it reads KSFASQNNYRIDANQE. The helical transmembrane segment at 325 to 345 threads the bilayer; that stretch reads LLAIGLTNVLGSLVSSYPVTG. Residues 346 to 361 are Extracellular-facing; it reads SFGRTAVNAQTGVCTP. Residues 362–382 form a helical membrane-spanning segment; sequence AGGLVTGALVLLSLNYLTSLF. Position 383 (Ser383) is a topological domain, cytoplasmic. The chain crosses the membrane as a helical span at residues 384-404; the sequence is YIPKSALAAVIITAVTPLFDV. At 405–417 the chain is on the extracellular side; it reads KIFRSLWRVQRLD. A helical transmembrane segment spans residues 418–438; it reads LLPLCVTFLLSFWEIQYGILA. At 439 to 593 the chain is on the cytoplasmic side; sequence GSLVSLLILL…SSLLKSPSGP (155 aa). In terms of domain architecture, STAS spans 453 to 566; it reads RPKTQVSEGQ…EEAEKFLQQE (114 aa). The disordered stretch occupies residues 564 to 593; the sequence is QQEPGTEPNSIHEDAVPEQRSSLLKSPSGP. A compositionally biased stretch (polar residues) spans 582-593; the sequence is QRSSLLKSPSGP.

This sequence belongs to the SLC26A/SulP transporter (TC 2.A.53) family. As to expression, abundantly expressed in the cerebellum, with a predominant expression in Purkinje cells (at protein level). Predominantly expressed in the kidney and brain. In the kidney localizes in collecting duct intercalated cells (at protein level). In terms of tissue distribution, predominantly expressed in the brain with lower levels in the kidney.

Its subcellular location is the cell membrane. The protein resides in the lysosome membrane. The protein localises to the apical cell membrane. It is found in the basolateral cell membrane. It carries out the reaction hydrogencarbonate(in) + chloride(out) = hydrogencarbonate(out) + chloride(in). The enzyme catalyses sulfate(in) + H(+)(in) = sulfate(out) + H(+)(out). It catalyses the reaction oxalate(in) + chloride(out) = oxalate(out) + chloride(in). Sodium-independent anion exchanger mediating bicarbonate, chloride, sulfate and oxalate transport. Exhibits sodium-independent sulfate anion transporter activity that may cooperate with SLC26A2 to mediate DIDS-sensitive sulfate uptake into high endothelial venules endothelial cells (HEVEC). In the kidney, mediates chloride-bicarbonate exchange, facilitating V-ATPase-mediated acid secretion. May function as a chloride channel, playing an important role in moderating chloride homeostasis and neuronal activity in the cerebellum. The polypeptide is Sodium-independent sulfate anion transporter (Mus musculus (Mouse)).